A 52-amino-acid chain; its full sequence is UPF0391 membrane protein ACIAD3602 (52 aa).

2 consecutive transmembrane segments (helical) span residues 6 to 26 (IIFAVIALIASLLGFGGVAGL) and 30 to 50 (FAVILLVVAVILAIVGFISRG).

Belongs to the UPF0391 family.

The protein localises to the cell membrane. The chain is UPF0391 membrane protein ACIAD3602 from Acinetobacter baylyi (strain ATCC 33305 / BD413 / ADP1).